The sequence spans 454 residues: UDP-N-acetylmuramate--L-alanine ligase (454 aa).

113–119 serves as a coordination point for ATP; the sequence is GSHGKTT.

Belongs to the MurCDEF family.

The protein localises to the cytoplasm. The catalysed reaction is UDP-N-acetyl-alpha-D-muramate + L-alanine + ATP = UDP-N-acetyl-alpha-D-muramoyl-L-alanine + ADP + phosphate + H(+). The protein operates within cell wall biogenesis; peptidoglycan biosynthesis. Functionally, cell wall formation. The polypeptide is UDP-N-acetylmuramate--L-alanine ligase (Aquifex aeolicus (strain VF5)).